The sequence spans 212 residues: Thymidylate kinase (212 aa).

A2 carries the post-translational modification N-acetylalanine. ATP-binding positions include 16 to 21 (RAGKST) and R97. The segment at 133-157 (LQLQLADAAKRGAFGHERYENGAFQ) is LID. The residue at position 169 (K169) is an N6-acetyllysine. 2 residues coordinate ATP: K182 and R192.

The protein belongs to the thymidylate kinase family. In terms of assembly, homodimer. Requires Mg(2+) as cofactor.

It carries out the reaction dTMP + ATP = dTDP + ADP. It functions in the pathway pyrimidine metabolism; dTTP biosynthesis. Catalyzes the phosphorylation of thymidine monophosphate (dTMP) to thymidine diphosphate (dTDP), the immediate precursor for the DNA building block dTTP, with ATP as the preferred phosphoryl donor in the presence of Mg(2+). This is Thymidylate kinase (DTYMK) from Homo sapiens (Human).